A 440-amino-acid chain; its full sequence is Adenylosuccinate synthetase 1, chloroplastic (440 aa).

Residues 13–19 (GDEGKGK) and 41–43 (GHT) each bind GTP. The active-site Proton acceptor is the D14. Residues D14 and G41 each coordinate Mg(2+). IMP-binding positions include 14–17 (DEGK), 39–42 (NAGH), T135, R149, Q230, T245, and R313. H42 functions as the Proton donor in the catalytic mechanism. Position 309–315 (309–315 (TVTRRKR)) interacts with substrate. Residues R315 and 341-343 (KLD) contribute to the GTP site.

It belongs to the adenylosuccinate synthetase family. In terms of assembly, homodimer. Requires Mg(2+) as cofactor.

Its subcellular location is the plastid. The protein localises to the chloroplast. It catalyses the reaction IMP + L-aspartate + GTP = N(6)-(1,2-dicarboxyethyl)-AMP + GDP + phosphate + 2 H(+). The protein operates within purine metabolism; AMP biosynthesis via de novo pathway; AMP from IMP: step 1/2. Functionally, plays an important role in the de novo pathway and in the salvage pathway of purine nucleotide biosynthesis. Catalyzes the first committed step in the biosynthesis of AMP from IMP. The polypeptide is Adenylosuccinate synthetase 1, chloroplastic (Ricinus communis (Castor bean)).